An 809-amino-acid polypeptide reads, in one-letter code: Sodium/hydrogen exchanger 2 (809 aa).

A run of 7 helical transmembrane segments spans residues 107–127, 138–158, 169–189, 209–229, 237–257, 278–298, and 308–328; these read IVPESCLLIMVGLLLGGIIFG, TDVFFLYLLPPIVLDAGYFMP, IFWYAVVGTLWNSIGIGVSLF, LFGSLISAVDPVAVLAVFENI, ILVFGESLLNDAVTVVLYNLF, FFVVGIGGVLIGIFLGFIAAF, and VIEPLFVFLYSYLSYITAEMF. Asn350 carries N-linked (GlcNAc...) asparagine glycosylation. A run of 4 helical transmembrane segments spans residues 361 to 381, 392 to 412, 430 to 450, and 459 to 479; these read YFMKMLSSVSETLIFIFMGVS, AFVCFTLAFCLIWRALGVFVL, FIIAYGGLRGAICFALVFLLP, and LFITAAIVVIFFTVFILGITI. Basic and acidic residues-rich tracts occupy residues 648-660 and 793-809; these read IRKDNSLNRERRA and RASEPGNRKSRLGSDKP. Disordered stretches follow at residues 648–700 and 734–809; these read IRKD…EADA and EVDA…SDKP.

Belongs to the monovalent cation:proton antiporter 1 (CPA1) transporter (TC 2.A.36) family. Interacts with CHP1 and CHP2. As to expression, high levels in intestine and kidney. Strongly expressed in gastric epithelial cells, with particularly high expression levels in mucous cells.

The protein resides in the apical cell membrane. The enzyme catalyses Na(+)(in) + H(+)(out) = Na(+)(out) + H(+)(in). Functionally, plasma membrane Na(+)/H(+) antiporter. Mediates the electroneutral exchange of intracellular H(+) ions for extracellular Na(+). Major apical Na(+)/H(+) exchanger in the base of the colonic crypt. Controls in the colonic crypt intracellular pH (pHi) to direct colonic epithelial cell differentiation into the absorptive enterocyte lineage at the expense of the secretory lineage. In Oryctolagus cuniculus (Rabbit), this protein is Sodium/hydrogen exchanger 2 (SLC9A2).